A 516-amino-acid chain; its full sequence is Endo-acting ulvan lyase (516 aa).

Positions 1 to 24 (MLEKTTLKNIILIHFLMFLAVVTA) are cleaved as a signal peptide. The cysteines at positions 38 and 65 are disulfide-linked. Ca(2+) is bound by residues Gly42, Asn44, Asp62, Ser64, Ala67, and Asn68. Position 138 (Tyr138) interacts with substrate. The active-site Proton acceptor is the Lys143. Residues 191-195 (EGDGR) and 260-263 (YRVK) contribute to the substrate site. The active-site Proton donor/acceptor is the Tyr260. Residues 289-429 (PIGDVYKLKN…VWKAIAVESL (141 aa)) are ulvan-binding domain. Positions 430–516 (SVDENAILAS…NKYHKKLIVK (87 aa)) are cleaved as a propeptide — removed by the type IX secretion system (T9SS).

It belongs to the polysaccharide lyase 28 family. It depends on Ca(2+) as a cofactor.

The protein resides in the secreted. Its function is as follows. Ulvan lyase involved in ulvan degradation. Ulvan is the main polysaccharide component of the Ulvales (green seaweed) cell wall. It is composed of disaccharide building blocks comprising 3-sulfated rhamnose (Rha3S) linked to D-glucuronic acid (GlcA), L-iduronic acid (IduA), or D-xylose (Xyl). Ulvan lyase catalyzes the endolytic cleavage of the glycosidic bond between Rha3S and the uronic acids GlcA or IduA, producing oligosaccharides that have unsaturated 4-deoxy-L-threo-hex-4-enopyranosiduronic acid (deltaUA) at the non-reducing end. This results eventually in the degradation of the ulvan polysaccharide into deltaUA-Rha3S disaccharides and deltaUA-Rha3S-Xyl-Rha3S tetrasaccharides. This Formosa agariphila (strain DSM 15362 / KCTC 12365 / LMG 23005 / KMM 3901 / M-2Alg 35-1) protein is Endo-acting ulvan lyase.